We begin with the raw amino-acid sequence, 438 residues long: Exosome complex component RRP45B (438 aa).

Disordered regions lie at residues 293-322 (PTLA…RAAE) and 334-438 (STEE…KNKS). Basic and acidic residues-rich tracts occupy residues 307-322 (VKEE…RAAE) and 334-347 (STEE…EEAA). Residues 380–394 (TKSSSTKKMNGSGNA) are compositionally biased toward polar residues. Over residues 410–429 (LGKKDTKHKDGEMTLKDAVK) the composition is skewed to basic and acidic residues.

This sequence belongs to the RNase PH family.

It localises to the cytoplasm. It is found in the nucleus. In terms of biological role, probable 3'-&gt;5' exoribonuclease involved in the regulation of cuticular wax biosynthesis by controlling the expression of CER3. May act by degrading a specific mRNA species encoding a negative regulator of CER3 transcription. Can perform exosomal functions and complement the yeast rrp45 null mutant. The sequence is that of Exosome complex component RRP45B from Arabidopsis thaliana (Mouse-ear cress).